The chain runs to 139 residues: Actin-depolymerizing factor 1 (139 aa).

One can recognise an ADF-H domain in the interval 5-139 (ASGMAVCDEC…SMDIVKSRAL (135 aa)).

Belongs to the actin-binding proteins ADF family.

Functionally, actin-depolymerizing protein. Severs actin filaments (F-actin) and binds to actin monomers. In Oryza sativa subsp. japonica (Rice), this protein is Actin-depolymerizing factor 1 (ADF1).